The chain runs to 335 residues: Olfactory receptor 9K2 (335 aa).

Residues 1 to 50 (MLGSKPRVHLYILPCASQQVSTMGDRGTSNHSEMTDFILAGFRVRPELHI) are Extracellular-facing. N-linked (GlcNAc...) asparagine glycosylation occurs at Asn30. Residues 51 to 71 (LLFLLFLFVYAMILLGNVGMM) traverse the membrane as a helical segment. The Cytoplasmic portion of the chain corresponds to 72–79 (TIIMTDPR). Residues 80–100 (LNTPMYFFLGNLSFIDLFYSS) traverse the membrane as a helical segment. Topologically, residues 101–124 (VIEPKAMINFWSENKSISFAGCVA) are extracellular. Asn114 is a glycosylation site (N-linked (GlcNAc...) asparagine). Cys122 and Cys214 are disulfide-bonded. Residues 125–145 (QLFLFALLIVTEGFLLAAMAY) traverse the membrane as a helical segment. The Cytoplasmic segment spans residues 146 to 164 (DRFIAICNPLLYSVQMSTR). The helical transmembrane segment at 165–185 (LCTQLVAGSYFCGCISSVIQT) threads the bilayer. At 186-222 (SMTFTLSFCASRAVDHFYCDSRPLQRLSCSDLFIHRM) the chain is on the extracellular side. The chain crosses the membrane as a helical span at residues 223 to 242 (ISFSLSCIIILPTIIVIIVS). Topologically, residues 243-262 (YMYIVSTVLKIHSTEGHKKA) are cytoplasmic. Residues 263 to 283 (FSTCSSHLGVVSVLYGAVFFM) form a helical membrane-spanning segment. Residues 284–296 (YLTPDRFPELSKV) are Extracellular-facing. Residues 316–335 (RNKDVQEALKKFLEKKNIIL) are Cytoplasmic-facing.

Belongs to the G-protein coupled receptor 1 family.

Its subcellular location is the cell membrane. Functionally, odorant receptor. This Homo sapiens (Human) protein is Olfactory receptor 9K2 (OR9K2).